The following is a 248-amino-acid chain: 1-(5-phosphoribosyl)-5-[(5-phosphoribosylamino)methylideneamino] imidazole-4-carboxamide isomerase (248 aa).

Aspartate 8 acts as the Proton acceptor in catalysis. Catalysis depends on aspartate 129, which acts as the Proton donor.

Belongs to the HisA/HisF family.

It is found in the cytoplasm. It catalyses the reaction 1-(5-phospho-beta-D-ribosyl)-5-[(5-phospho-beta-D-ribosylamino)methylideneamino]imidazole-4-carboxamide = 5-[(5-phospho-1-deoxy-D-ribulos-1-ylimino)methylamino]-1-(5-phospho-beta-D-ribosyl)imidazole-4-carboxamide. It participates in amino-acid biosynthesis; L-histidine biosynthesis; L-histidine from 5-phospho-alpha-D-ribose 1-diphosphate: step 4/9. The chain is 1-(5-phosphoribosyl)-5-[(5-phosphoribosylamino)methylideneamino] imidazole-4-carboxamide isomerase from Desulfitobacterium hafniense (strain Y51).